Here is a 443-residue protein sequence, read N- to C-terminus: Phosphoglucosamine mutase (443 aa).

Catalysis depends on serine 101, which acts as the Phosphoserine intermediate. 4 residues coordinate Mg(2+): serine 101, aspartate 239, aspartate 241, and aspartate 243. The residue at position 101 (serine 101) is a Phosphoserine.

Belongs to the phosphohexose mutase family. The cofactor is Mg(2+). In terms of processing, activated by phosphorylation.

The enzyme catalyses alpha-D-glucosamine 1-phosphate = D-glucosamine 6-phosphate. Functionally, catalyzes the conversion of glucosamine-6-phosphate to glucosamine-1-phosphate. This chain is Phosphoglucosamine mutase, found in Francisella tularensis subsp. novicida (strain U112).